Consider the following 110-residue polypeptide: Large ribosomal subunit protein uL22 (110 aa).

The protein belongs to the universal ribosomal protein uL22 family. Part of the 50S ribosomal subunit.

In terms of biological role, this protein binds specifically to 23S rRNA; its binding is stimulated by other ribosomal proteins, e.g. L4, L17, and L20. It is important during the early stages of 50S assembly. It makes multiple contacts with different domains of the 23S rRNA in the assembled 50S subunit and ribosome. Functionally, the globular domain of the protein is located near the polypeptide exit tunnel on the outside of the subunit, while an extended beta-hairpin is found that lines the wall of the exit tunnel in the center of the 70S ribosome. This Solidesulfovibrio magneticus (strain ATCC 700980 / DSM 13731 / RS-1) (Desulfovibrio magneticus) protein is Large ribosomal subunit protein uL22.